The chain runs to 445 residues: Xylose isomerase (445 aa).

Active-site residues include histidine 99 and aspartate 102. Mg(2+) is bound by residues glutamate 230, glutamate 266, histidine 269, aspartate 294, aspartate 305, aspartate 307, and aspartate 337.

It belongs to the xylose isomerase family. In terms of assembly, homotetramer. The cofactor is Mg(2+).

Its subcellular location is the cytoplasm. It catalyses the reaction alpha-D-xylose = alpha-D-xylulofuranose. In Geobacillus kaustophilus (strain HTA426), this protein is Xylose isomerase.